Consider the following 613-residue polypeptide: Glucose-6-phosphate isomerase 1, chloroplastic (613 aa).

The span at M1–L14 shows a compositional bias: low complexity. Positions M1–S21 are disordered. The N-terminal 48 residues, M1–L48, are a transit peptide targeting the chloroplast. Catalysis depends on E392, which acts as the Proton donor. Active-site residues include H421 and K526. The residue at position 595 (S595) is a Phosphoserine.

It belongs to the GPI family.

The protein localises to the plastid. Its subcellular location is the chloroplast stroma. It catalyses the reaction alpha-D-glucose 6-phosphate = beta-D-fructose 6-phosphate. The protein operates within carbohydrate degradation; glycolysis; D-glyceraldehyde 3-phosphate and glycerone phosphate from D-glucose: step 2/4. It functions in the pathway carbohydrate biosynthesis; gluconeogenesis. Inhibited by glycerol-3-P (G3P). In terms of biological role, promotes the synthesis of starch in leaves. In Arabidopsis thaliana (Mouse-ear cress), this protein is Glucose-6-phosphate isomerase 1, chloroplastic (PGI1).